The sequence spans 263 residues: Glucosamine-6-phosphate deaminase (263 aa).

Residue Asp72 is the Proton acceptor; for enolization step of the active site. The active-site For ring-opening step is the Asp141. The Proton acceptor; for ring-opening step role is filled by His143. Catalysis depends on Glu148, which acts as the For ring-opening step.

It belongs to the glucosamine/galactosamine-6-phosphate isomerase family. NagB subfamily.

The catalysed reaction is alpha-D-glucosamine 6-phosphate + H2O = beta-D-fructose 6-phosphate + NH4(+). Its pathway is amino-sugar metabolism; N-acetylneuraminate degradation; D-fructose 6-phosphate from N-acetylneuraminate: step 5/5. Its activity is regulated as follows. Allosterically activated by N-acetylglucosamine 6-phosphate (GlcNAc6P). In terms of biological role, catalyzes the reversible isomerization-deamination of glucosamine 6-phosphate (GlcN6P) to form fructose 6-phosphate (Fru6P) and ammonium ion. The polypeptide is Glucosamine-6-phosphate deaminase (Porphyromonas gingivalis (strain ATCC BAA-308 / W83)).